The sequence spans 211 residues: ATP phosphoribosyltransferase (211 aa).

This sequence belongs to the ATP phosphoribosyltransferase family. Short subfamily. In terms of assembly, heteromultimer composed of HisG and HisZ subunits.

It localises to the cytoplasm. The catalysed reaction is 1-(5-phospho-beta-D-ribosyl)-ATP + diphosphate = 5-phospho-alpha-D-ribose 1-diphosphate + ATP. It participates in amino-acid biosynthesis; L-histidine biosynthesis; L-histidine from 5-phospho-alpha-D-ribose 1-diphosphate: step 1/9. In terms of biological role, catalyzes the condensation of ATP and 5-phosphoribose 1-diphosphate to form N'-(5'-phosphoribosyl)-ATP (PR-ATP). Has a crucial role in the pathway because the rate of histidine biosynthesis seems to be controlled primarily by regulation of HisG enzymatic activity. This is ATP phosphoribosyltransferase from Lacticaseibacillus paracasei (strain ATCC 334 / BCRC 17002 / CCUG 31169 / CIP 107868 / KCTC 3260 / NRRL B-441) (Lactobacillus paracasei).